Reading from the N-terminus, the 311-residue chain is Protoheme IX farnesyltransferase (311 aa).

Helical transmembrane passes span 32–52, 53–73, 98–118, 120–140, 153–173, 180–200, 226–246, 248–268, and 285–305; these read VMSL…VVVD, PLYG…AGAL, ISRG…VFLM, VLIN…YIVI, IVIG…AATG, FLLF…LCLF, ILVY…TGYA, IIYG…AYRL, and FFFS…EFLI.

It belongs to the UbiA prenyltransferase family. Protoheme IX farnesyltransferase subfamily.

The protein localises to the cell inner membrane. It carries out the reaction heme b + (2E,6E)-farnesyl diphosphate + H2O = Fe(II)-heme o + diphosphate. Its pathway is porphyrin-containing compound metabolism; heme O biosynthesis; heme O from protoheme: step 1/1. Its function is as follows. Converts heme B (protoheme IX) to heme O by substitution of the vinyl group on carbon 2 of heme B porphyrin ring with a hydroxyethyl farnesyl side group. In Bartonella bacilliformis (strain ATCC 35685 / KC583 / Herrer 020/F12,63), this protein is Protoheme IX farnesyltransferase.